The following is a 184-amino-acid chain: Peptidoglycan-recognition protein SC2 (184 aa).

The first 20 residues, 1–20 (MANKALILLAVLFCAQAVLG), serve as a signal peptide directing secretion. Positions 45–169 (SYAVIHHTAG…RQVGSTECPG (125 aa)) constitute an N-acetylmuramoyl-L-alanine amidase domain. H50 provides a ligand contact to Zn(2+). A disulfide bridge links C57 with C63. The Zn(2+) site is built by H159 and C167.

The protein belongs to the N-acetylmuramoyl-L-alanine amidase 2 family. It depends on Zn(2+) as a cofactor.

The protein localises to the secreted. It carries out the reaction Hydrolyzes the link between N-acetylmuramoyl residues and L-amino acid residues in certain cell-wall glycopeptides.. Functionally, N-acetylmuramyl-L-alanine amidase involved in innate immunity by degrading bacterial peptidoglycans (PGN). Probably plays a scavenger role by digesting biologically active PGN into biologically inactive fragments. Has no direct bacteriolytic activity. This is Peptidoglycan-recognition protein SC2 (PGRP-SC2) from Drosophila simulans (Fruit fly).